Reading from the N-terminus, the 315-residue chain is uncharacterized protein (315 aa).

2 coiled-coil regions span residues 184-212 (AGEE…TPEQ) and 238-275 (EEHR…YKEK).

It belongs to the IIV-6 287R family.

This is an uncharacterized protein from Acheta domesticus (House cricket).